A 317-amino-acid polypeptide reads, in one-letter code: OVARIAN TUMOR DOMAIN-containing deubiquitinating enzyme 4 (317 aa).

Residues 168-306 (YSIIGIPGDG…FGHYDALLLH (139 aa)) enclose the OTU domain. Residue Asp-176 is part of the active site. Cys-179 acts as the Nucleophile in catalysis. The active site involves His-299.

The protein belongs to the peptidase C65 family.

The protein localises to the cytoplasm. The enzyme catalyses Thiol-dependent hydrolysis of ester, thioester, amide, peptide and isopeptide bonds formed by the C-terminal Gly of ubiquitin (a 76-residue protein attached to proteins as an intracellular targeting signal).. Functionally, hydrolase that can remove conjugated ubiquitin from proteins in vitro and may therefore play an important regulatory role at the level of protein turnover by preventing degradation. Cysteine protease with a preference for 'Lys-63' over 'Lys-48'-linked over 'Met-1' ubiquitin (UB) tetramers (e.g. Ub3 and Ub4) as substrates. Also cleaves RUB-GST fusion. The sequence is that of OVARIAN TUMOR DOMAIN-containing deubiquitinating enzyme 4 from Arabidopsis thaliana (Mouse-ear cress).